Reading from the N-terminus, the 340-residue chain is MCAQYCISFADVEKAHINIRDSIHLTPVLTSSILNQLTGRNLFFKCELFQKTGSFKIRGALNAVRSLVPDALERKPKAVVTHSSGNHGQALTYAAKLEGIPAYIVVPQTAPDCKKLAIQAYGASIVYCEPSDESRENVAKRVTEETEGIMVHPNQEPAVIAGQGTIALEVLNQVPLVDALVVPVGGGGMLAGIAITVKALKPSVKVYAAEPSNADDCYQSKLKGKLMPNLYPPETIADGVKSSIGLNTWPIIRDLVDDIFTVTEDEIKCATQLVWERMKLLIEPTAGVGVAAVLSQHFQTVSPEVKNICIVLSGGNVDLTSSITWVKQAERPASYQSVSV.

Position 13 (E13) interacts with Mg(2+). The ATP site is built by S31, S32, I33, K51, and T52. K56 functions as the Proton acceptor in the catalytic mechanism. K56 bears the N6-(pyridoxal phosphate)lysine mark. Residues P69 and T81 each coordinate Ca(2+). S84 functions as the Proton acceptor in the catalytic mechanism. N86 provides a ligand contact to pyridoxal 5'-phosphate. Q89 is a binding site for ATP. The residue at position 113 (C113) is an S-nitrosocysteine. Y121 serves as a coordination point for ATP. Pyridoxal 5'-phosphate is bound at residue N154. D178 serves as a coordination point for Mg(2+). The pyridoxal 5'-phosphate site is built by G185, G186, G187, G188, and M189. 4 residues coordinate Mg(2+): E210, A214, D216, and N247. The Ca(2+) site is built by E210, A214, D216, and N247. The Mn(2+) site is built by E210, A214, and D216. Position 279 (K279) interacts with ATP. S313 serves as a coordination point for pyridoxal 5'-phosphate. Residue N316 participates in ATP binding.

This sequence belongs to the serine/threonine dehydratase family. In terms of assembly, homodimer. Mg(2+) serves as cofactor. It depends on Mn(2+) as a cofactor. Ca(2+) is required as a cofactor. Requires pyridoxal 5'-phosphate as cofactor. S-nitrosylated, leading to decrease the enzyme activity. In terms of tissue distribution, expressed in the cerebellum, hippocampus, dorsolateral prefrontal cortex, and in motor neurons and glial cells of the lumbar spinal cord (at protein level). Increased in the dorsolateral prefrontal cortex of schizophrenic patients (at protein level). Brain: expressed at high levels in hippocampus and corpus callosum, intermediate levels in substantia nigra and caudate, and low levels in amygdala, thalamus, and subthalamic nuclei. Expressed in heart, skeletal muscle, kidney, and liver.

It catalyses the reaction L-serine = D-serine. The catalysed reaction is D-serine = pyruvate + NH4(+). The enzyme catalyses L-serine = pyruvate + NH4(+). Its activity is regulated as follows. Allosterically activated by magnesium, and possibly also other divalent metal cations. Allosterically activated by ATP, ADP or GTP. Competitively inhibited by malonate. Inhibited by meso-tartrate and malonate. Catalyzes the synthesis of D-serine from L-serine. D-serine is a key coagonist with glutamate at NMDA receptors. Has dehydratase activity towards both L-serine and D-serine. The sequence is that of Serine racemase (SRR) from Homo sapiens (Human).